Consider the following 190-residue polypeptide: Threonylcarbamoyl-AMP synthase (190 aa).

In terms of domain architecture, YrdC-like spans 7 to 190 (RDAIAAAIDV…ALTGELFRQG (184 aa)).

Belongs to the SUA5 family. TsaC subfamily.

The protein resides in the cytoplasm. It carries out the reaction L-threonine + hydrogencarbonate + ATP = L-threonylcarbamoyladenylate + diphosphate + H2O. Its function is as follows. Required for the formation of a threonylcarbamoyl group on adenosine at position 37 (t(6)A37) in tRNAs that read codons beginning with adenine. Catalyzes the conversion of L-threonine, HCO(3)(-)/CO(2) and ATP to give threonylcarbamoyl-AMP (TC-AMP) as the acyladenylate intermediate, with the release of diphosphate. The chain is Threonylcarbamoyl-AMP synthase from Escherichia coli O9:H4 (strain HS).